We begin with the raw amino-acid sequence, 250 residues long: Cobalt transport protein CbiM (250 aa).

Positions 1 to 25 are cleaved as a signal peptide; the sequence is MKQNIKLGVIAALMLIVLTPVTSNA. 6 consecutive transmembrane segments (helical) span residues 33-53, 68-88, 100-120, 132-152, 163-183, and 205-225; these read LPVK…LVGL, VLLA…IPSV, LGAI…VLIF, TLGA…FLIF, AMPV…VTSI, and GIFF…TVIV.

Belongs to the CbiM family. As to quaternary structure, forms an energy-coupling factor (ECF) transporter complex composed of an ATP-binding protein (A component, CbiO), a transmembrane protein (T component, CbiQ) and 2 possible substrate-capture proteins (S components, CbiM and CbiN) of unknown stoichimetry.

It localises to the cell membrane. The protein operates within cofactor biosynthesis; adenosylcobalamin biosynthesis. Part of the energy-coupling factor (ECF) transporter complex CbiMNOQ involved in cobalt import. This Clostridioides difficile (strain R20291) (Peptoclostridium difficile) protein is Cobalt transport protein CbiM.